Here is a 519-residue protein sequence, read N- to C-terminus: Arabinose import ATP-binding protein AraG 2 (519 aa).

ABC transporter domains lie at 29 to 264 (LSLD…MVGR) and 264 to 515 (RSIE…LIKL). Position 61–68 (61–68 (GENGAGKS)) interacts with ATP.

The protein belongs to the ABC transporter superfamily. Arabinose importer (TC 3.A.1.2.2) family. The complex is composed of two ATP-binding proteins (AraG), two transmembrane proteins (AraH) and a solute-binding protein (AraF).

The protein localises to the cell inner membrane. The catalysed reaction is L-arabinose(out) + ATP + H2O = L-arabinose(in) + ADP + phosphate + H(+). Functionally, part of the ABC transporter complex AraFGH involved in arabinose import. Responsible for energy coupling to the transport system. The sequence is that of Arabinose import ATP-binding protein AraG 2 from Burkholderia ambifaria (strain ATCC BAA-244 / DSM 16087 / CCUG 44356 / LMG 19182 / AMMD) (Burkholderia cepacia (strain AMMD)).